A 590-amino-acid chain; its full sequence is DNA primase (590 aa).

The segment at 37-61 (CPFHKEKTPSFSVSPTKQFYHCFSC) adopts a CHC2-type zinc-finger fold. Positions 255–337 (GRILVVEGYM…DKSLHFLFLP (83 aa)) constitute a Toprim domain. Mg(2+) contacts are provided by Glu261, Asp305, and Asp307.

Belongs to the DnaG primase family. In terms of assembly, monomer. Interacts with DnaB. Requires Zn(2+) as cofactor. Mg(2+) is required as a cofactor.

It catalyses the reaction ssDNA + n NTP = ssDNA/pppN(pN)n-1 hybrid + (n-1) diphosphate.. Its function is as follows. RNA polymerase that catalyzes the synthesis of short RNA molecules used as primers for DNA polymerase during DNA replication. This is DNA primase from Neisseria meningitidis serogroup A / serotype 4A (strain DSM 15465 / Z2491).